The chain runs to 291 residues: 4-hydroxy-tetrahydrodipicolinate synthase (291 aa).

A pyruvate-binding site is contributed by Thr-45. Residue Tyr-131 is the Proton donor/acceptor of the active site. The active-site Schiff-base intermediate with substrate is the Lys-159. Ile-202 lines the pyruvate pocket.

The protein belongs to the DapA family. As to quaternary structure, homotetramer; dimer of dimers.

Its subcellular location is the cytoplasm. It catalyses the reaction L-aspartate 4-semialdehyde + pyruvate = (2S,4S)-4-hydroxy-2,3,4,5-tetrahydrodipicolinate + H2O + H(+). Its pathway is amino-acid biosynthesis; L-lysine biosynthesis via DAP pathway; (S)-tetrahydrodipicolinate from L-aspartate: step 3/4. Catalyzes the condensation of (S)-aspartate-beta-semialdehyde [(S)-ASA] and pyruvate to 4-hydroxy-tetrahydrodipicolinate (HTPA). This Methanococcoides burtonii (strain DSM 6242 / NBRC 107633 / OCM 468 / ACE-M) protein is 4-hydroxy-tetrahydrodipicolinate synthase.